A 281-amino-acid chain; its full sequence is 1-acyl-sn-glycerol-3-phosphate acyltransferase (281 aa).

3 helical membrane-spanning segments follow: residues Ile40–Leu60, Leu71–Ile91, and Ala110–Ala130. An HXXXXD motif motif is present at residues His109 to Asp114.

It belongs to the 1-acyl-sn-glycerol-3-phosphate acyltransferase family.

The protein localises to the membrane. It catalyses the reaction a 1-acyl-sn-glycero-3-phosphate + an acyl-CoA = a 1,2-diacyl-sn-glycero-3-phosphate + CoA. It participates in phospholipid metabolism; CDP-diacylglycerol biosynthesis; CDP-diacylglycerol from sn-glycerol 3-phosphate: step 2/3. Its function is as follows. Converts lysophosphatidic acid (LPA) into phosphatidic acid by incorporating acyl moiety at the 2 position. This enzyme uses erucoyl-CoA as an acyl donor. This chain is 1-acyl-sn-glycerol-3-phosphate acyltransferase, found in Limnanthes alba (White meadowfoam).